The primary structure comprises 415 residues: Squalene synthase 2 (415 aa).

The next 2 helical transmembrane spans lie at 281-301 (AIFR…ALCY) and 392-412 (LIVI…SNLP).

Belongs to the phytoene/squalene synthase family. It depends on Mg(2+) as a cofactor. Mn(2+) serves as cofactor.

Its subcellular location is the endoplasmic reticulum membrane. It carries out the reaction 2 (2E,6E)-farnesyl diphosphate + NADH + H(+) = squalene + 2 diphosphate + NAD(+). The catalysed reaction is 2 (2E,6E)-farnesyl diphosphate + NADPH + H(+) = squalene + 2 diphosphate + NADP(+). It participates in terpene metabolism; lanosterol biosynthesis; lanosterol from farnesyl diphosphate: step 1/3. In terms of biological role, component of the triterpene saponins (e.g. ginsenosides or panaxosides) and phytosterols biosynthetic pathways. Catalyzes the biosynthesis of squalene. The sequence is that of Squalene synthase 2 from Panax ginseng (Korean ginseng).